The primary structure comprises 380 residues: MASLRKIHPLMKITNDMVIDLPAPSNISVWWNFGSLLGLCLFSQILTGLFLAMHYTSDISTAFSSVVHTCRDVNYGWFIRSLHANGASFFFICIYLHIARGLYYGSYLYKETWTIGVVLLGLVMATAFVGYVLPWGQMSFWGATVITNLLSAIPYVGGTLVQWIWGGFSVDNATLTRFFTFHFLLPFIIAAATLVHLLFLHETGSNNPTGLNSDADKVSFHPYFSYKDLLGFLALLSALTSLALFSPNLLGDPDNFIPANPLVTPPHIKPEWYFLFAYAILRSIPNKLGGVLALLFSILVLVLVPILHTSKQRGLMFRPLTQTLFWTLVADMLILTWIGGMPVEYPFVIIGQVASTLYFLLFLVLAPTAGWLENKSLKWL.

4 consecutive transmembrane segments (helical) span residues Phe33–Met53, Trp77–Ile98, Trp113–Leu133, and Phe178–Leu198. Residues His83 and His97 each contribute to the heme b site. Heme b-binding residues include His182 and His196. His201 is an a ubiquinone binding site. The next 4 membrane-spanning stretches (helical) occupy residues Tyr226–Ser246, Leu288–His308, Leu320–Gly340, and Phe347–Pro367.

The protein belongs to the cytochrome b family. In terms of assembly, the cytochrome bc1 complex contains 3 respiratory subunits (MT-CYB, CYC1 and UQCRFS1), 2 core proteins (UQCRC1 and UQCRC2) and probably 6 low-molecular weight proteins. Requires heme b as cofactor.

It localises to the mitochondrion inner membrane. Component of the ubiquinol-cytochrome c reductase complex (complex III or cytochrome b-c1 complex) that is part of the mitochondrial respiratory chain. The b-c1 complex mediates electron transfer from ubiquinol to cytochrome c. Contributes to the generation of a proton gradient across the mitochondrial membrane that is then used for ATP synthesis. The protein is Cytochrome b (mt-cyb) of Lampris guttatus (Opah).